The following is a 180-amino-acid chain: Large ribosomal subunit protein uL5 (180 aa).

Belongs to the universal ribosomal protein uL5 family. As to quaternary structure, part of the 50S ribosomal subunit; part of the 5S rRNA/L5/L18/L25 subcomplex. Contacts the 5S rRNA and the P site tRNA. Forms a bridge to the 30S subunit in the 70S ribosome.

Its function is as follows. This is one of the proteins that bind and probably mediate the attachment of the 5S RNA into the large ribosomal subunit, where it forms part of the central protuberance. In the 70S ribosome it contacts protein S13 of the 30S subunit (bridge B1b), connecting the 2 subunits; this bridge is implicated in subunit movement. Contacts the P site tRNA; the 5S rRNA and some of its associated proteins might help stabilize positioning of ribosome-bound tRNAs. This Streptococcus pyogenes serotype M1 protein is Large ribosomal subunit protein uL5.